The following is a 342-amino-acid chain: 4-amino-5-hydroxymethyl-2-methylpyrimidine phosphate synthase (342 aa).

K62 is modified (N6-(pyridoxal phosphate)lysine). H66 is an active-site residue. 115-118 contacts pyridoxal 5'-phosphate; the sequence is GEFG. The short motif at 195-199 is the CCCFC; essential for catalytic activity, may be the site of iron coordination element; sequence CCCFC.

The protein belongs to the NMT1/THI5 family. In terms of assembly, homodimer. The cofactor is Fe cation.

The catalysed reaction is N(6)-(pyridoxal phosphate)-L-lysyl-[4-amino-5-hydroxymethyl-2-methylpyrimidine phosphate synthase] + L-histidyl-[4-amino-5-hydroxymethyl-2-methylpyrimidine phosphate synthase] + 2 Fe(3+) + 4 H2O = L-lysyl-[4-amino-5-hydroxymethyl-2-methylpyrimidine phosphate synthase] + (2S)-2-amino-5-hydroxy-4-oxopentanoyl-[4-amino-5-hydroxymethyl-2-methylpyrimidine phosphate synthase] + 4-amino-2-methyl-5-(phosphooxymethyl)pyrimidine + 3-oxopropanoate + 2 Fe(2+) + 2 H(+). It functions in the pathway cofactor biosynthesis; thiamine diphosphate biosynthesis. Responsible for the formation of the pyrimidine heterocycle in the thiamine biosynthesis pathway. Catalyzes the formation of hydroxymethylpyrimidine phosphate (HMP-P) from histidine and pyridoxal phosphate (PLP). The protein uses PLP and the active site histidine to form HMP-P, generating an inactive enzyme. The enzyme can only undergo a single turnover, which suggests it is a suicide enzyme. This Aspergillus parasiticus protein is 4-amino-5-hydroxymethyl-2-methylpyrimidine phosphate synthase.